Here is a 428-residue protein sequence, read N- to C-terminus: Mitochondrial import inner membrane translocase subunit TIM50-C (428 aa).

Residues 59–79 (LFTCTALPAAAPALFSILHTA) traverse the membrane as a helical segment. Over 80 to 428 (RGYSSTTKQE…KQWSRNILGR (349 aa)) the chain is Mitochondrial intermembrane. The segment at 112–138 (FPQTSPEVDSNAEQERKKREEEEEKEN) is disordered. Basic and acidic residues predominate over residues 124 to 138 (EQERKKREEEEEKEN). The FCP1 homology domain maps to 224 to 367 (YVQPRYTLVL…LDLIAFLKII (144 aa)).

It belongs to the TIM50 family. As to quaternary structure, component of the TIM23 complex at least composed of Tim23, Tim17 (Tim17a1, Tim17a2 or Tim17b1) and a Tim50.

It localises to the mitochondrion inner membrane. Essential component of the TIM23 complex, a complex that mediates the translocation of transit peptide-containing proteins across the mitochondrial inner membrane. The chain is Mitochondrial import inner membrane translocase subunit TIM50-C (ttm50) from Drosophila melanogaster (Fruit fly).